We begin with the raw amino-acid sequence, 375 residues long: Porin Omp2b (375 aa).

The N-terminal stretch at methionine 1–alanine 22 is a signal peptide.

Belongs to the alphaproteobacteria porin family. In terms of assembly, homotrimer.

It localises to the cell outer membrane. In terms of biological role, forms passive diffusion pores that allow small molecular weight hydrophilic materials across the outer membrane. This Brucella suis protein is Porin Omp2b (omp2b).